The chain runs to 315 residues: Methionine import ATP-binding protein MetN (315 aa).

One can recognise an ABC transporter domain in the interval 2–219 (IEIEKVCVDF…PQHAFTQQLV (218 aa)). 16 to 23 (GTSGAGKS) provides a ligand contact to ATP.

The protein belongs to the ABC transporter superfamily. Methionine importer (TC 3.A.1.24) family. In terms of assembly, the complex is composed of two ATP-binding proteins (MetN), two transmembrane proteins (MetI) and a solute-binding protein (MetQ).

The protein localises to the cell inner membrane. It catalyses the reaction L-methionine(out) + ATP + H2O = L-methionine(in) + ADP + phosphate + H(+). The enzyme catalyses D-methionine(out) + ATP + H2O = D-methionine(in) + ADP + phosphate + H(+). In terms of biological role, part of the ABC transporter complex MetNIQ involved in methionine import. Responsible for energy coupling to the transport system. In Salmonella enteritidis, this protein is Methionine import ATP-binding protein MetN.